Consider the following 485-residue polypeptide: Forkhead box protein N3 (485 aa).

Disordered regions lie at residues 1-54 and 85-108; these read MGPV…KGGM and PVQDIDDDTPPSPAQSDMPYDAKQ. The span at 16–30 shows a compositional bias: polar residues; it reads ISVSSQCYRSSTLSN. Residues 113–209 constitute a DNA-binding region (fork-head); the sequence is KPPYSFSCLI…QALKKTPYHP (97 aa). 2 disordered regions span residues 316–357 and 401–449; these read MESE…ISSS and PLVE…MKEA. Over residues 338 to 357 the composition is skewed to low complexity; that stretch reads SSAKSANKRSSSPSDSISSS. Over residues 410–422 the composition is skewed to basic residues; it reads QHKKKQHLLKLRR.

In terms of tissue distribution, at early cleavage stages, localized within the animal half of the embryo. At gastrulation, expression expands over the whole embryo excluding the future endodermal cells of the blastopore. During neurulation, expressed in the prospective eye field and in the neural crest cells. Strongly enriched in the eye vesicles at stage 26. From stage 29 onwards, expressed predominantly in the eye, the branchial arches and the vagal ganglion. At stage 38, expressed throughout the head with strongest expression in the head mesenchyme and the eye lens.

The protein localises to the nucleus. Its function is as follows. Acts as a transcriptional repressor. May be involved in DNA damage-inducible cell cycle arrests (checkpoints). This Xenopus laevis (African clawed frog) protein is Forkhead box protein N3.